The sequence spans 145 residues: Leptin (145 aa).

A disulfide bridge connects residues Cys-95 and Cys-145.

This sequence belongs to the leptin family.

Its subcellular location is the secreted. In terms of biological role, key player in the regulation of energy balance and body weight control. Once released into the circulation, has central and peripheral effects by binding LEPR, found in many tissues, which results in the activation of several major signaling pathways. This chain is Leptin (LEP), found in Meleagris gallopavo (Wild turkey).